Reading from the N-terminus, the 211-residue chain is Pyridoxine/pyridoxamine 5'-phosphate oxidase (211 aa).

Substrate is bound by residues 7–10 (RRDY) and K65. FMN contacts are provided by residues 60 to 65 (RIVLLK), 75 to 76 (YT), R81, K82, and Q104. Residues Y122, R126, and S130 each coordinate substrate. Residues 139-140 (QS) and W184 contribute to the FMN site. Position 190–192 (190–192 (RLH)) interacts with substrate. R194 contributes to the FMN binding site.

This sequence belongs to the pyridoxamine 5'-phosphate oxidase family. Homodimer. FMN is required as a cofactor.

The enzyme catalyses pyridoxamine 5'-phosphate + O2 + H2O = pyridoxal 5'-phosphate + H2O2 + NH4(+). The catalysed reaction is pyridoxine 5'-phosphate + O2 = pyridoxal 5'-phosphate + H2O2. It functions in the pathway cofactor metabolism; pyridoxal 5'-phosphate salvage; pyridoxal 5'-phosphate from pyridoxamine 5'-phosphate: step 1/1. Its pathway is cofactor metabolism; pyridoxal 5'-phosphate salvage; pyridoxal 5'-phosphate from pyridoxine 5'-phosphate: step 1/1. In terms of biological role, catalyzes the oxidation of either pyridoxine 5'-phosphate (PNP) or pyridoxamine 5'-phosphate (PMP) into pyridoxal 5'-phosphate (PLP). The polypeptide is Pyridoxine/pyridoxamine 5'-phosphate oxidase (Aliivibrio salmonicida (strain LFI1238) (Vibrio salmonicida (strain LFI1238))).